Here is a 195-residue protein sequence, read N- to C-terminus: Probable GTP-binding protein EngB (195 aa).

The EngB-type G domain maps to 22–194 (LKGEVAFVGR…LDLISTLLKE (173 aa)). GTP-binding positions include 30 to 37 (GRSNVGKS), 56 to 60 (GKTRS), 74 to 77 (DLPG), 141 to 144 (TKMD), and 173 to 175 (TSS). The Mg(2+) site is built by serine 37 and threonine 58.

This sequence belongs to the TRAFAC class TrmE-Era-EngA-EngB-Septin-like GTPase superfamily. EngB GTPase family. Requires Mg(2+) as cofactor.

In terms of biological role, necessary for normal cell division and for the maintenance of normal septation. The protein is Probable GTP-binding protein EngB of Thermotoga sp. (strain RQ2).